The primary structure comprises 182 residues: Homeobox expressed in ES cells 1-A (182 aa).

The homeobox DNA-binding region spans 103–163 (YRGRRPRTAF…QNRRAKLKRS (61 aa)).

It belongs to the ANF homeobox family. In terms of tissue distribution, initially expressed in the anterior dorsal region of early embryos and later exclusively in the primordium of the anterior pituitary gland.

It is found in the nucleus. Appears to be involved in the regional specification of the anterior head of Xenopus embryos. The chain is Homeobox expressed in ES cells 1-A (hesx1-a) from Xenopus laevis (African clawed frog).